The sequence spans 313 residues: Glutaminase (313 aa).

Ser64, Asn116, Glu163, Asn170, Tyr194, Tyr246, and Val264 together coordinate substrate.

The protein belongs to the glutaminase family. As to quaternary structure, homotetramer.

It catalyses the reaction L-glutamine + H2O = L-glutamate + NH4(+). In Exiguobacterium sp. (strain ATCC BAA-1283 / AT1b), this protein is Glutaminase.